Consider the following 260-residue polypeptide: Snake venom serine protease homolog 1 (260 aa).

Positions 1–18 (MVLIRVLANLLILQLSYA) are cleaved as a signal peptide. The propeptide occupies 19-24 (QKSSEL). The Peptidase S1 domain maps to 25–251 (IIGGDECNIN…HLDWIKSIIA (227 aa)). Disulfide bonds link C31-C165, C52-C68, C100-C258, C144-C212, C176-C191, and C202-C227. 3 N-linked (GlcNAc...) asparagine glycosylation sites follow: N83, N123, and N124.

This sequence belongs to the peptidase S1 family. Snake venom subfamily. As to expression, expressed by the venom gland.

The protein resides in the secreted. In terms of biological role, snake venom serine protease homolog that may act in the hemostasis system of the prey. This is Snake venom serine protease homolog 1 from Trimeresurus stejnegeri (Chinese green tree viper).